The following is a 419-amino-acid chain: Keratin, type II cytoskeletal I (419 aa).

Residues 1-16 are linker 1; it reads KGSTKRANLDPLFEKY. Residues 1 to 275 form the IF rod domain; the sequence is KGSTKRANLD…YMLEGEEGRM (275 aa). The segment at 17–108 is coil 1B; it reads ISDLKRYLDN…TLFAAELSQV (92 aa). Residues 109-132 are linker 12; it reads HDQVTDTSVVLTMDNNRDLNLDSI. The coil 2 stretch occupies residues 133–271; the sequence is IKEVKCQYEQ…STYRYMLEGE (139 aa). The segment at 272–419 is tail; the sequence is EGRMSGQISN…STTSTTKRSY (148 aa).

The protein belongs to the intermediate filament family. As to quaternary structure, heterotetramer of two type I and two type II keratins.

This Xenopus laevis (African clawed frog) protein is Keratin, type II cytoskeletal I.